The primary structure comprises 195 residues: Imidazoleglycerol-phosphate dehydratase (195 aa).

Belongs to the imidazoleglycerol-phosphate dehydratase family.

The protein resides in the cytoplasm. The catalysed reaction is D-erythro-1-(imidazol-4-yl)glycerol 3-phosphate = 3-(imidazol-4-yl)-2-oxopropyl phosphate + H2O. It participates in amino-acid biosynthesis; L-histidine biosynthesis; L-histidine from 5-phospho-alpha-D-ribose 1-diphosphate: step 6/9. The chain is Imidazoleglycerol-phosphate dehydratase from Campylobacter concisus (strain 13826).